We begin with the raw amino-acid sequence, 680 residues long: Conserved oligomeric Golgi complex subunit 6 (680 aa).

The segment at 479 to 517 is disordered; it reads HKSKKSGQLPRRSRTSSDSSQLTSVDALLSSSPSPPQNN.

Belongs to the COG6 family. As to quaternary structure, component of the conserved oligomeric Golgi complex which is composed of eight different subunits and is required for normal Golgi morphology and localization. Interacts with COG5, COG7 and COG8.

It is found in the golgi apparatus membrane. Functionally, required for normal Golgi function. This Arabidopsis thaliana (Mouse-ear cress) protein is Conserved oligomeric Golgi complex subunit 6.